A 79-amino-acid chain; its full sequence is Acyl carrier protein (79 aa).

The 76-residue stretch at 2 to 77 (SSIEERVKKI…QAVDYINKHL (76 aa)) folds into the Carrier domain. O-(pantetheine 4'-phosphoryl)serine is present on Ser-37.

It belongs to the acyl carrier protein (ACP) family. Post-translationally, 4'-phosphopantetheine is transferred from CoA to a specific serine of apo-ACP by AcpS. This modification is essential for activity because fatty acids are bound in thioester linkage to the sulfhydryl of the prosthetic group.

It localises to the cytoplasm. It functions in the pathway lipid metabolism; fatty acid biosynthesis. Its function is as follows. Carrier of the growing fatty acid chain in fatty acid biosynthesis. The chain is Acyl carrier protein from Alkalilimnicola ehrlichii (strain ATCC BAA-1101 / DSM 17681 / MLHE-1).